The following is a 222-amino-acid chain: 2-C-methyl-D-erythritol 4-phosphate cytidylyltransferase (222 aa).

This sequence belongs to the IspD/TarI cytidylyltransferase family. IspD subfamily.

It carries out the reaction 2-C-methyl-D-erythritol 4-phosphate + CTP + H(+) = 4-CDP-2-C-methyl-D-erythritol + diphosphate. It functions in the pathway isoprenoid biosynthesis; isopentenyl diphosphate biosynthesis via DXP pathway; isopentenyl diphosphate from 1-deoxy-D-xylulose 5-phosphate: step 2/6. Its function is as follows. Catalyzes the formation of 4-diphosphocytidyl-2-C-methyl-D-erythritol from CTP and 2-C-methyl-D-erythritol 4-phosphate (MEP). This Porphyromonas gingivalis (strain ATCC BAA-308 / W83) protein is 2-C-methyl-D-erythritol 4-phosphate cytidylyltransferase.